Consider the following 123-residue polypeptide: Small ribosomal subunit protein uS12 (123 aa).

The tract at residues 1–32 (MPTINQLVRHGRKRSVKKTNTPALKASPQKRG) is disordered. The residue at position 89 (Asp-89) is a 3-methylthioaspartic acid.

The protein belongs to the universal ribosomal protein uS12 family. In terms of assembly, part of the 30S ribosomal subunit. Contacts proteins S8 and S17. May interact with IF1 in the 30S initiation complex.

Its function is as follows. With S4 and S5 plays an important role in translational accuracy. Interacts with and stabilizes bases of the 16S rRNA that are involved in tRNA selection in the A site and with the mRNA backbone. Located at the interface of the 30S and 50S subunits, it traverses the body of the 30S subunit contacting proteins on the other side and probably holding the rRNA structure together. The combined cluster of proteins S8, S12 and S17 appears to hold together the shoulder and platform of the 30S subunit. In Desulfatibacillum aliphaticivorans, this protein is Small ribosomal subunit protein uS12.